Consider the following 525-residue polypeptide: MSQDIHAHRILILDFGSQYTQLIARRVREIGVYCEIHPFDMSNEAIIAFAPRGIILAGGPESVHEADSPRAPQAVFDLKVPLFGICYGMQTMAEQMGGKVQGSDVREFGYARVDVVGKARLLDGIEDHVDDDGVLGLDVWMSHGDKVTEMPAGFHILASTPSCPIAAMADDARAYYGVQFHPEVTHTKQGLRILSRFVLDICGCAALWTPSNIVDDAIATVRAQVGSSKVLLGLSGGVDSSVVAALLHKAIGDQLTCVFVDNGLLRLHEGDQVMAMFAENMGVKVIRANAEDKFLGRLAGVADPEEKRKIIGRTFIEVFDEEATKLQDVKFLAQGTIYPDVIESAGAKTGKAHVIKSHHNVGGLPEDMQFELVEPLRELFKDEVRKIGLELGLPYDMVYRHPFPGPGLGVRILGEVKKEYADLLRQADHIFIEELRAFDWYHKTSQAFVVFQPVKSVGVVGDGRRYAWVVALRAVETIDFMTARWAHLPYELLEKVSNRIINEIAGISRVTYDVSSKPPATIEWE.

In terms of domain architecture, Glutamine amidotransferase type-1 spans 9–207 (RILILDFGSQ…VLDICGCAAL (199 aa)). Residue Cys-86 is the Nucleophile of the active site. Residues His-181 and Glu-183 contribute to the active site. In terms of domain architecture, GMPS ATP-PPase spans 208–400 (WTPSNIVDDA…LGLPYDMVYR (193 aa)). Residue 235–241 (SGGVDSS) participates in ATP binding.

As to quaternary structure, homodimer.

The enzyme catalyses XMP + L-glutamine + ATP + H2O = GMP + L-glutamate + AMP + diphosphate + 2 H(+). Its pathway is purine metabolism; GMP biosynthesis; GMP from XMP (L-Gln route): step 1/1. Its function is as follows. Catalyzes the synthesis of GMP from XMP. This chain is GMP synthase [glutamine-hydrolyzing], found in Pseudomonas aeruginosa (strain UCBPP-PA14).